Reading from the N-terminus, the 415-residue chain is Dynein assembly factor with WD repeat domains 1 (415 aa).

WD repeat units follow at residues 90-129 (AHIL…ELNT), 132-174 (GHRN…HTFR), 175-214 (GHTA…EVYT), 217-256 (GHSA…KVNI), 259-298 (GHCA…CVAT), 301-340 (GHDD…CIAK), 343-384 (GHEG…QVLE), and 386-415 (HTDE…RIWR).

This sequence belongs to the WD repeat WDR69 family. Interacts with IFT46.

Its subcellular location is the cytoplasm. The protein localises to the cytoskeleton. The protein resides in the flagellum basal body. It localises to the flagellum axoneme. Functionally, required for axonemal dynein assembly and ciliary motility in ciliated organs, including Kupffer's vesicle, during embryogenesis. Facilitates the onset of robust cilia motility during development. This chain is Dynein assembly factor with WD repeat domains 1, found in Homo sapiens (Human).